The sequence spans 268 residues: Tryptophan synthase alpha chain (268 aa).

Catalysis depends on proton acceptor residues Glu-49 and Asp-60.

The protein belongs to the TrpA family. Tetramer of two alpha and two beta chains.

It catalyses the reaction (1S,2R)-1-C-(indol-3-yl)glycerol 3-phosphate + L-serine = D-glyceraldehyde 3-phosphate + L-tryptophan + H2O. It participates in amino-acid biosynthesis; L-tryptophan biosynthesis; L-tryptophan from chorismate: step 5/5. Its function is as follows. The alpha subunit is responsible for the aldol cleavage of indoleglycerol phosphate to indole and glyceraldehyde 3-phosphate. The polypeptide is Tryptophan synthase alpha chain (Shigella boydii serotype 18 (strain CDC 3083-94 / BS512)).